The chain runs to 95 residues: FXYD domain-containing ion transport regulator 6 (95 aa).

Positions 1 to 18 (MELVLVFLCSLLAPMVLA) are cleaved as a signal peptide. At 19 to 35 (STAEKEKEMDPFHYDYQ) the chain is on the extracellular side. Residues 36–58 (TLRIGGLVFAVVLFSVGILLILS) traverse the membrane as a helical segment. At 59–95 (RRCKCSFNQKPRAPGDEEAQVENLITANATEPQKAEN) the chain is on the cytoplasmic side.

This sequence belongs to the FXYD family. Regulatory subunit of the sodium/potassium-transporting ATPase which is composed of a catalytic alpha subunit, a non-catalytic beta subunit and an additional regulatory subunit. The regulatory subunit, a member of the FXYD protein family, modulates the enzymatic activity in a tissue- and isoform-specific way by changing affinities of the Na+/K+-ATPase toward Na(+), K(+) or ATP.

The protein resides in the cell membrane. Its function is as follows. Associates with and regulates the activity of the sodium/potassium-transporting ATPase (NKA) which catalyzes the hydrolysis of ATP coupled with the exchange of Na(+) and K(+) ions across the plasma membrane. Reduces the apparent affinity for intracellular Na(+) with no change in the apparent affinity for extracellular K(+). In addition to modulating NKA kinetics, may also function as a regulator of NKA localization to the plasma membrane. The chain is FXYD domain-containing ion transport regulator 6 (FXYD6) from Macaca fascicularis (Crab-eating macaque).